Reading from the N-terminus, the 70-residue chain is U-actitoxin-Avd11a (70 aa).

One can recognise a ShKT domain in the interval 36 to 70; it reads CNDYKSSSYCRSVGSRNECGIHKYRMYCRKTCGSC. Disulfide bonds link C36–C70, C45–C63, and C54–C67. The segment at 58–59 is crucial for binding to potassium channels; that stretch reads KY.

It belongs to the sea anemone type 1 potassium channel toxin family. Type 1b subfamily.

The protein resides in the secreted. The protein localises to the nematocyst. Inhibits voltage-gated potassium channels (Kv1/KCNA). The sequence is that of U-actitoxin-Avd11a from Anemonia viridis (Snakelocks anemone).